The sequence spans 261 residues: UPF0246 protein PMI0005 (261 aa).

This sequence belongs to the UPF0246 family.

The chain is UPF0246 protein PMI0005 from Proteus mirabilis (strain HI4320).